The sequence spans 312 residues: Cytoplasmic dynein intermediate light chain DYN3 (312 aa).

Belongs to the dynein light intermediate chain DYN3 family. The dynein complex consists of at least two heavy chains and a number of intermediate and light chains. Interacts with DYN1.

It localises to the cytoplasm. It is found in the cytoskeleton. Functionally, component of the cytoplasmic dynein which acts as a motor for the intracellular retrograde motility of vesicles and organelles along microtubules. May play an important role in the proper orientation of the mitotic spindle into the budding daughter cell yeast. Probably required for normal progression of the cell cycle. This is Cytoplasmic dynein intermediate light chain DYN3 (DYN3) from Saccharomyces cerevisiae (strain ATCC 204508 / S288c) (Baker's yeast).